A 520-amino-acid polypeptide reads, in one-letter code: Ribonuclease Y (520 aa).

Residues 4–24 (TMFTIISILLSLICLVVGYFV) form a helical membrane-spanning segment. The region spanning 210 to 273 (TVSVVNLPND…ETARIALDKL (64 aa)) is the KH domain. One can recognise an HD domain in the interval 336 to 429 (VLKHSIEVAH…VAAADALSAA (94 aa)).

It belongs to the RNase Y family.

The protein resides in the cell membrane. In terms of biological role, endoribonuclease that initiates mRNA decay. This chain is Ribonuclease Y, found in Bacillus pumilus (strain SAFR-032).